Reading from the N-terminus, the 431-residue chain is Serine hydroxymethyltransferase (431 aa).

Residues leucine 121 and 125-127 (GHL) each bind (6S)-5,6,7,8-tetrahydrofolate. Lysine 230 is subject to N6-(pyridoxal phosphate)lysine. Position 369-371 (369-371 (SPF)) interacts with (6S)-5,6,7,8-tetrahydrofolate.

This sequence belongs to the SHMT family. Homodimer. It depends on pyridoxal 5'-phosphate as a cofactor.

The protein localises to the cytoplasm. The catalysed reaction is (6R)-5,10-methylene-5,6,7,8-tetrahydrofolate + glycine + H2O = (6S)-5,6,7,8-tetrahydrofolate + L-serine. It participates in one-carbon metabolism; tetrahydrofolate interconversion. It functions in the pathway amino-acid biosynthesis; glycine biosynthesis; glycine from L-serine: step 1/1. In terms of biological role, catalyzes the reversible interconversion of serine and glycine with tetrahydrofolate (THF) serving as the one-carbon carrier. This reaction serves as the major source of one-carbon groups required for the biosynthesis of purines, thymidylate, methionine, and other important biomolecules. Also exhibits THF-independent aldolase activity toward beta-hydroxyamino acids, producing glycine and aldehydes, via a retro-aldol mechanism. This chain is Serine hydroxymethyltransferase, found in Cytophaga hutchinsonii (strain ATCC 33406 / DSM 1761 / CIP 103989 / NBRC 15051 / NCIMB 9469 / D465).